The following is a 442-amino-acid chain: Metacaspase-5 (442 aa).

Residues 1–18 (MDLLLGVLSSGILQNALP) form the signal peptide. The tract at residues 19-62 (FVAGVGRVKRPKRVKLEEAFREAHLCRPVIPYRAPTPYTGGRVK) is important for catalytic activity. Asn69 and Asn112 each carry an N-linked (GlcNAc...) asparagine glycan. His146 is a catalytic residue. Ca(2+) is bound by residues Asp161, Asp177, and Asp178. The active site involves Cys201. Ca(2+) is bound at residue Asp208. Residues Asn234, Asn257, Asn282, and Asn331 are each glycosylated (N-linked (GlcNAc...) asparagine). The segment at 336–442 (HYVPQQYLQP…QYLSGVGKPL (107 aa)) is negatively regulates catalytic activity. Residues 348–371 (PPQPYYPPPQPQQPYYPPPQPQQP) are compositionally biased toward pro residues. The disordered stretch occupies residues 348-442 (PPQPYYPPPQ…QYLSGVGKPL (95 aa)). Positions 372-382 (YYPSSQLPTQY) are enriched in low complexity. Positions 422-434 (PSDQSTYYSSAQY) are enriched in polar residues.

This sequence belongs to the peptidase C14B family. In epimastigotes, the unprocessed enzyme appears to be the main form. Auto-processing is dispensable for catalytic activity towards small oligopeptide substrates.

It is found in the recycling endosome. Activated by Ca(2+). Cysteine protease that cleaves specifically after arginine or lysine residues. May play a role in apoptosis. The chain is Metacaspase-5 from Trypanosoma cruzi (strain CL Brener).